The following is a 527-amino-acid chain: MFGLLVNFYRFCRKKTERKITIALLGLDNAGKTTLLNSIQGEVDRDTTPTFGFNSTTLNEGKYKIEVFDLGGGKNIRGVWKKYLAEVHAIVYVVDAADPGRFEESKMTMAEVLENQFMRDKPICIFANKQDLPTAAPAAEVVKGLGLATCRNSHNVFPCTAKMPAGQDVDHRLRDGLKWLVGTVDREFGRLDPRVQTEAEEVRQEEARKKKEREERLRKQREERLRQQKEEEERAREVEKENELHDGKAPSLLAAGGGVVGAAAAGVNGVMVDEQQELRPPGQHQEAPEALGLHNGLALGLPHTIESPGKFPPPPRRPLEAHPASDLRLVAPDQGVSSASGGPGLGAMPSGSHGGGGVPPQPASLPHVRAALPPLPPSAPQPSDAGVGSSGSASRHPGAHSSSAAAPPNVASGAAAEDGPEPDAAGTAAGEAGSGSVFAPRPASAGGGGPGSRGSGSGMTPDARELGSGGVESGEGTPARLRAGAQQASDGGHGNSKGSFSLVHTSNKVVPVAPDLRAGIPGAPNDA.

GTP is bound by residues 26–33, 69–73, and 128–131; these read GLDNAGKT, DLGGG, and NKQD. The segment covering 200-248 has biased composition (basic and acidic residues); that stretch reads EEVRQEEARKKKEREERLRKQREERLRQQKEEEERAREVEKENELHDGK. Disordered stretches follow at residues 200 to 252 and 300 to 503; these read EEVR…APSL and GLPH…FSLV. Low complexity predominate over residues 381-444; it reads QPSDAGVGSS…GSVFAPRPAS (64 aa). Residues 445–457 are compositionally biased toward gly residues; the sequence is AGGGGPGSRGSGS.

The protein belongs to the small GTPase superfamily. Arf family. As to quaternary structure, monomer.

The protein resides in the cell projection. Its subcellular location is the cilium membrane. In terms of biological role, cilium-specific protein required to control the microtubule-based, ciliary axoneme structure. May act by maintaining the association between IFT subcomplexes A and B. The chain is ADP-ribosylation factor-like protein 13B (ARL13) from Chlamydomonas reinhardtii (Chlamydomonas smithii).